The sequence spans 130 residues: Small ribosomal subunit protein uS8B (130 aa).

The protein belongs to the universal ribosomal protein uS8 family.

The polypeptide is Small ribosomal subunit protein uS8B (RpS15Ab) (Drosophila melanogaster (Fruit fly)).